A 284-amino-acid polypeptide reads, in one-letter code: Xyloglucan endotransglucosylase/hydrolase protein 22 (284 aa).

Residues 1–21 (MAITYLLPLFLSLIITSSVSA) form the signal peptide. Residues 22-211 (NFQRDVEITW…WSKAPFTASY (190 aa)) enclose the GH16 domain. The active-site Nucleophile is Glu-97. Glu-101 (proton donor) is an active-site residue. Glu-101 lines the xyloglucan pocket. The N-linked (GlcNAc...) asparagine glycan is linked to Asn-105. Residues 114–116 (HTN), 124–126 (DKE), 190–191 (DW), and Gly-195 each bind xyloglucan. A disulfide bridge links Cys-219 with Cys-228. Asn-230 carries an N-linked (GlcNAc...) asparagine glycan. An intrachain disulfide couples Cys-267 to Cys-281. Arg-272 lines the xyloglucan pocket.

Belongs to the glycosyl hydrolase 16 family. XTH group 2 subfamily. In terms of processing, contains at least one intrachain disulfide bond essential for its enzymatic activity. Post-translationally, N-glycosylated; essential for its enzymatic activity. As to expression, highly expressed. Predominantly expressed in green siliques. Expressed in young expanding leaves, trichomes, lateral root primordia, vascular tissue, abscission zones and elongating hypocols. Following wind stimulation, it decreases in the leaves of wind-stimulated plants, while it strongly increases in sites around cells of the pith parenchyma, between the vascular elements, and within the epidermis.

Its subcellular location is the secreted. It is found in the cell wall. It localises to the extracellular space. The protein localises to the apoplast. It carries out the reaction breaks a beta-(1-&gt;4) bond in the backbone of a xyloglucan and transfers the xyloglucanyl segment on to O-4 of the non-reducing terminal glucose residue of an acceptor, which can be a xyloglucan or an oligosaccharide of xyloglucan.. Functionally, catalyzes xyloglucan endohydrolysis (XEH) and/or endotransglycosylation (XET). Cleaves and religates xyloglucan polymers, an essential constituent of the primary cell wall, and thereby participates in cell wall construction of growing tissues. Its induction in case of mechanical stress, suggests that it may contribute in the adaptive changes in morphogenesis by being recruited to alter tissues tensil strength, or flexibility, enabling adaptation to mechanically stressful environments. The polypeptide is Xyloglucan endotransglucosylase/hydrolase protein 22 (XTH22) (Arabidopsis thaliana (Mouse-ear cress)).